Consider the following 361-residue polypeptide: Histidinol-phosphate aminotransferase (361 aa).

Lys219 carries the N6-(pyridoxal phosphate)lysine modification.

The protein belongs to the class-II pyridoxal-phosphate-dependent aminotransferase family. Histidinol-phosphate aminotransferase subfamily. In terms of assembly, homodimer. Pyridoxal 5'-phosphate serves as cofactor.

The enzyme catalyses L-histidinol phosphate + 2-oxoglutarate = 3-(imidazol-4-yl)-2-oxopropyl phosphate + L-glutamate. Its pathway is amino-acid biosynthesis; L-histidine biosynthesis; L-histidine from 5-phospho-alpha-D-ribose 1-diphosphate: step 7/9. The protein is Histidinol-phosphate aminotransferase of Cereibacter sphaeroides (strain KD131 / KCTC 12085) (Rhodobacter sphaeroides).